We begin with the raw amino-acid sequence, 82 residues long: Endocuticle structural glycoprotein ABD-5 (82 aa).

The residue at position 1 (glutamine 1) is a Pyrrolidone carboxylic acid. The 65-residue stretch at leucine 18–serine 82 folds into the Chitin-binding type R&amp;R domain.

Component of the soft endocuticle of migratory locust. The sequence is that of Endocuticle structural glycoprotein ABD-5 from Locusta migratoria (Migratory locust).